The following is a 728-amino-acid chain: 1,4-alpha-glucan branching enzyme GlgB (728 aa).

Aspartate 405 (nucleophile) is an active-site residue. The active-site Proton donor is the glutamate 458.

The protein belongs to the glycosyl hydrolase 13 family. GlgB subfamily. In terms of assembly, monomer.

The enzyme catalyses Transfers a segment of a (1-&gt;4)-alpha-D-glucan chain to a primary hydroxy group in a similar glucan chain.. The protein operates within glycan biosynthesis; glycogen biosynthesis. Its function is as follows. Catalyzes the formation of the alpha-1,6-glucosidic linkages in glycogen by scission of a 1,4-alpha-linked oligosaccharide from growing alpha-1,4-glucan chains and the subsequent attachment of the oligosaccharide to the alpha-1,6 position. This Escherichia coli O1:K1 / APEC protein is 1,4-alpha-glucan branching enzyme GlgB.